A 455-amino-acid chain; its full sequence is Bifunctional protein GlmU (455 aa).

The interval 1–230 (MTKRNAIILA…FDESMGVNDR (230 aa)) is pyrophosphorylase. Residues 9–12 (LAAG), K23, Q73, 78–79 (GT), 101–103 (SGD), G140, E155, N170, and N228 each bind UDP-N-acetyl-alpha-D-glucosamine. Residue D103 coordinates Mg(2+). N228 contacts Mg(2+). Positions 231–251 (VALARANKVMRNRINTHWMRE) are linker. The interval 252–455 (GVSMIDPETT…KENYAKKLPW (204 aa)) is N-acetyltransferase. UDP-N-acetyl-alpha-D-glucosamine is bound by residues R333 and K351. The active-site Proton acceptor is the H363. The UDP-N-acetyl-alpha-D-glucosamine site is built by Y366 and N377. Acetyl-CoA-binding positions include 386–387 (NY), S405, A423, and R440.

The protein in the N-terminal section; belongs to the N-acetylglucosamine-1-phosphate uridyltransferase family. In the C-terminal section; belongs to the transferase hexapeptide repeat family. As to quaternary structure, homotrimer. It depends on Mg(2+) as a cofactor.

Its subcellular location is the cytoplasm. It catalyses the reaction alpha-D-glucosamine 1-phosphate + acetyl-CoA = N-acetyl-alpha-D-glucosamine 1-phosphate + CoA + H(+). It carries out the reaction N-acetyl-alpha-D-glucosamine 1-phosphate + UTP + H(+) = UDP-N-acetyl-alpha-D-glucosamine + diphosphate. It functions in the pathway nucleotide-sugar biosynthesis; UDP-N-acetyl-alpha-D-glucosamine biosynthesis; N-acetyl-alpha-D-glucosamine 1-phosphate from alpha-D-glucosamine 6-phosphate (route II): step 2/2. The protein operates within nucleotide-sugar biosynthesis; UDP-N-acetyl-alpha-D-glucosamine biosynthesis; UDP-N-acetyl-alpha-D-glucosamine from N-acetyl-alpha-D-glucosamine 1-phosphate: step 1/1. It participates in bacterial outer membrane biogenesis; LPS lipid A biosynthesis. Functionally, catalyzes the last two sequential reactions in the de novo biosynthetic pathway for UDP-N-acetylglucosamine (UDP-GlcNAc). The C-terminal domain catalyzes the transfer of acetyl group from acetyl coenzyme A to glucosamine-1-phosphate (GlcN-1-P) to produce N-acetylglucosamine-1-phosphate (GlcNAc-1-P), which is converted into UDP-GlcNAc by the transfer of uridine 5-monophosphate (from uridine 5-triphosphate), a reaction catalyzed by the N-terminal domain. This is Bifunctional protein GlmU from Limosilactobacillus reuteri (strain DSM 20016) (Lactobacillus reuteri).